A 388-amino-acid polypeptide reads, in one-letter code: Putative O-antigen polymerase (388 aa).

9 helical membrane-spanning segments follow: residues 23-43 (IFYP…GYEI), 57-77 (LIFL…TESV), 97-117 (VHNV…MRLS), 143-163 (NFSA…IWSK), 180-200 (IVFI…MVII), 215-235 (VYLI…LRGL), 312-332 (ISAE…GVLW), 338-358 (YISV…IFYH), and 361-381 (FMTN…FSQF).

It localises to the cell inner membrane. Its function is as follows. May function in vitro as a polymerase that catalyzes the polymerization of the O-antigen repeat units on the periplasmic face of the inner membrane, leading to the formation of the lipid-linked O-antigen molecule. However, E.coli K12 strains do not normally produce the O-antigen in vivo due to mutations in the rfb gene cluster. K12 strains are phenotypically rough, their lipopolysaccharide having a complete core structure, but no O-antigen. The protein is Putative O-antigen polymerase of Escherichia coli (strain K12).